Reading from the N-terminus, the 433-residue chain is Amino-acid acetyltransferase (433 aa).

An N-acetyltransferase domain is found at 287-426; sequence ELVREAAIED…ASLYNYQRNS (140 aa).

The protein belongs to the acetyltransferase family. ArgA subfamily.

It is found in the cytoplasm. The enzyme catalyses L-glutamate + acetyl-CoA = N-acetyl-L-glutamate + CoA + H(+). It functions in the pathway amino-acid biosynthesis; L-arginine biosynthesis; N(2)-acetyl-L-ornithine from L-glutamate: step 1/4. The polypeptide is Amino-acid acetyltransferase (Pseudomonas fluorescens (strain SBW25)).